The sequence spans 1214 residues: NBPF family member NBPF1 (1214 aa).

Residues 70-128 (MLRNERQFKEEKLAEQLKQAEELRQYKVLVHSQERELTQLREKLREGRDASRSLNQHLQ) adopt a coiled-coil conformation. Positions 162 to 200 (LSPENDEDEDEDVQVEEAEKVLESSAPREVQKAEESKVP) are disordered. Over residues 165–177 (ENDEDEDEDVQVE) the composition is skewed to acidic residues. The 95-residue stretch at 165 to 259 (ENDEDEDEDV…ECQDAVNILP (95 aa)) folds into the Olduvai 1 domain. Positions 190–200 (EVQKAEESKVP) are enriched in basic and acidic residues. A coiled-coil region spans residues 292–399 (NEKLHPQLAE…ASRSLNQHLQ (108 aa)). A disordered region spans residues 433-471 (LSPENDEDEDEDVQVEEAEKVLESSAPREVQKAEESKVP). Positions 436–448 (ENDEDEDEDVQVE) are enriched in acidic residues. The Olduvai 2 domain occupies 436–530 (ENDEDEDEDV…ECQDAVNILP (95 aa)). Basic and acidic residues predominate over residues 461-471 (EVQKAEESKVP). The stretch at 610–670 (KSMLRNERQF…ASCSLNQHLQ (61 aa)) forms a coiled coil. 6 Olduvai domains span residues 707–799 (ENDN…HIIP), 800–888 (ENES…ATGP), 891–946 (SREL…LDMD), 947–1038 (EIEK…PPCP), 1041–1114 (SREL…RSTK), and 1116–1214 (RRRR…IFPQ). Disordered stretches follow at residues 722 to 746 (EKVQ…EDSL) and 791 to 837 (WEDA…EGYS). Acidic residues-rich tracts occupy residues 801-810 (NESDDEEEEE) and 821-833 (ESEE…ESWD). Basic residues predominate over residues 1102–1121 (GKGKKRRGRRSTKKRRRRGR). The interval 1102-1136 (GKGKKRRGRRSTKKRRRRGRKEGEEDQNPPCPRLS) is disordered.

The protein belongs to the NBPF family. As to expression, widely expressed. The only tissue which shows a weak expression is kidney.

It localises to the cytoplasm. This is NBPF family member NBPF1 from Homo sapiens (Human).